Here is a 396-residue protein sequence, read N- to C-terminus: Tryptophan synthase beta chain (396 aa).

Lys86 is modified (N6-(pyridoxal phosphate)lysine).

It belongs to the TrpB family. As to quaternary structure, tetramer of two alpha and two beta chains. The cofactor is pyridoxal 5'-phosphate.

It catalyses the reaction (1S,2R)-1-C-(indol-3-yl)glycerol 3-phosphate + L-serine = D-glyceraldehyde 3-phosphate + L-tryptophan + H2O. It functions in the pathway amino-acid biosynthesis; L-tryptophan biosynthesis; L-tryptophan from chorismate: step 5/5. The beta subunit is responsible for the synthesis of L-tryptophan from indole and L-serine. This is Tryptophan synthase beta chain from Proteus mirabilis (strain HI4320).